We begin with the raw amino-acid sequence, 836 residues long: DNA gyrase subunit A (836 aa).

The Topo IIA-type catalytic domain maps to 46 to 510 (LPDARDGLKP…ISEEIDDESL (465 aa)). Tyr134 functions as the O-(5'-phospho-DNA)-tyrosine intermediate in the catalytic mechanism. The short motif at 537–543 (QHRGGVG) is the GyrA-box element.

The protein belongs to the type II topoisomerase GyrA/ParC subunit family. As to quaternary structure, heterotetramer, composed of two GyrA and two GyrB chains. In the heterotetramer, GyrA contains the active site tyrosine that forms a transient covalent intermediate with DNA, while GyrB binds cofactors and catalyzes ATP hydrolysis.

Its subcellular location is the cytoplasm. It carries out the reaction ATP-dependent breakage, passage and rejoining of double-stranded DNA.. Its function is as follows. A type II topoisomerase that negatively supercoils closed circular double-stranded (ds) DNA in an ATP-dependent manner to modulate DNA topology and maintain chromosomes in an underwound state. Negative supercoiling favors strand separation, and DNA replication, transcription, recombination and repair, all of which involve strand separation. Also able to catalyze the interconversion of other topological isomers of dsDNA rings, including catenanes and knotted rings. Type II topoisomerases break and join 2 DNA strands simultaneously in an ATP-dependent manner. The chain is DNA gyrase subunit A from Mycoplasma genitalium (strain ATCC 33530 / DSM 19775 / NCTC 10195 / G37) (Mycoplasmoides genitalium).